Here is a 257-residue protein sequence, read N- to C-terminus: Outer dense fiber protein 4 (257 aa).

Residues 1–41 are disordered; that stretch reads MDAEYSGNEFPRSEGERDQHQRPGKERKSGEAGWGTGELGQ. The span at 11–30 shows a compositional bias: basic and acidic residues; it reads PRSEGERDQHQRPGKERKSG. S64 is subject to Phosphoserine. The next 3 helical transmembrane spans lie at 80–100, 152–172, and 179–199; these read AQVLASELSLVAFILLLVVAF, VTFIFSTLMLFPINIWIFELE, and IGWSYFIGWLVLILYFTCAIL.

Expressed in testis and sperm; especially localized to sperm tail (at protein level).

It localises to the membrane. Component of the outer dense fibers (ODF) of spermatozoa which could be involved in sperm tail structure, sperm movement and general organization of cellular cytoskeleton. The polypeptide is Outer dense fiber protein 4 (ODF4) (Homo sapiens (Human)).